A 93-amino-acid polypeptide reads, in one-letter code: Small integral membrane protein 36 (93 aa).

Residues leucine 14–leucine 34 form a helical membrane-spanning segment. Residues proline 73–valine 93 are disordered.

The protein resides in the membrane. This Homo sapiens (Human) protein is Small integral membrane protein 36.